Here is a 346-residue protein sequence, read N- to C-terminus: Zinc transporter YKE4 (346 aa).

At 1–2 the chain is on the extracellular side; the sequence is MK. A helical transmembrane segment spans residues 3–23; that stretch reads ASHICSYLLSIAPLVVSHGVH. The Cytoplasmic portion of the chain corresponds to 24–69; the sequence is HNRDHGHEANHESKQSFLILKQESIFYSLVCFLQNHLFVLGPRYNA. A helical membrane pass occupies residues 70 to 90; the sequence is IVAILIIQLMPCLFVLFVPGL. At 91–99 the chain is on the extracellular side; it reads RKNDRASLT. The helical transmembrane segment at 100 to 120 threads the bilayer; the sequence is LSLLVSFSLGTLLGDILLHVI. At 121–126 the chain is on the cytoplasmic side; sequence PESLSG. The chain crosses the membrane as a helical span at residues 127 to 147; that stretch reads VTDVTMVGGAIFLGFISFLTL. Over 148-202 the chain is Extracellular; it reads DKTMRILSGTSNDDGSIHSHSHSHTPQQTAEKKAGFNMSAYLNVISGIAHHITDG. Asn184 is a glycosylation site (N-linked (GlcNAc...) asparagine). The chain crosses the membrane as a helical span at residues 203 to 223; that stretch reads IALATSFYSSTQVGIMTSIAV. Topologically, residues 224 to 252 are cytoplasmic; that stretch reads TFHEIPHELGDFAILLSSGFTFPQAIRAQ. Residues 253 to 273 form a helical membrane-spanning segment; sequence AVTAFGAVVGTSIGCWMNEIG. 2 N-linked (GlcNAc...) asparagine glycosylation sites follow: Asn274 and Asn285. Topologically, residues 274–290 are extracellular; that stretch reads NNSHKATSSSANASELM. Residues 291–311 traverse the membrane as a helical segment; sequence LPFTAGGLIYIATTSVVPQIL. Over 312 to 322 the chain is Cytoplasmic; it reads HSSAPDSKLRE. Residues 323–343 traverse the membrane as a helical segment; that stretch reads FKKWALQLVFIFVGFAVMALM. Topologically, residues 344-346 are extracellular; it reads DEH.

It belongs to the ZIP transporter (TC 2.A.5) family. KE4/Catsup subfamily.

It is found in the endoplasmic reticulum membrane. Zinc transporter whose role depends on the zinc status of the cells. It helps to balance zinc levels between the cytosol and the secretory pathway. It transports zinc into the secretory pathway in a zinc-adequate environment and in a high zinc medium. In high zinc medium, transport of zinc into the secretory pathway is a way to eliminate zinc from the cytosol. Under low cytosolic zinc conditions, it removes zinc from the secretory pathway and acts as a zinc importer that helps to alleviate ER stress. The protein is Zinc transporter YKE4 (YKE4) of Saccharomyces cerevisiae (strain ATCC 204508 / S288c) (Baker's yeast).